The chain runs to 364 residues: Zinc transporter 3 (364 aa).

A signal peptide spans 1–23; it reads MGAKKHTLQVLPWLLLFAQHTAA. Topologically, residues 24-44 are extracellular; sequence SACDCANTTDGADRQGAMKLK. N-linked (GlcNAc...) asparagine glycosylation is present at Asn-30. Residues 45 to 65 traverse the membrane as a helical segment; the sequence is LIAIASILAAGAAGVLVPVIG. At 66–76 the chain is on the cytoplasmic side; that stretch reads RSMAALRPDGD. Residues 77 to 97 traverse the membrane as a helical segment; the sequence is IFFAVKAFAAGVILATGMVHI. The Extracellular portion of the chain corresponds to 98 to 119; it reads LPAAFDALTSPCLKRGGGDRNP. A helical transmembrane segment spans residues 120 to 140; that stretch reads FPFAGLVSMSAAVSTMVVDSL. Topologically, residues 141–213 are cytoplasmic; it reads AAGYYHRSQF…ESIRHKVVSQ (73 aa). The helical transmembrane segment at 214-234 threads the bilayer; the sequence is VLELGILVHSVIIGVSLGASV. The Extracellular portion of the chain corresponds to 235–241; it reads RPSTIRP. The chain crosses the membrane as a helical span at residues 242 to 262; that stretch reads LVGALSFHQFFEGVGLGGCIV. Residues 263–271 lie on the Cytoplasmic side of the membrane; sequence QANFKVRAT. Residues 272-292 form a helical membrane-spanning segment; sequence VIMAIFFSLTAPVGIVLGIAI. Residues 293-303 lie on the Extracellular side of the membrane; it reads SSSYNVHSSTA. Residues 304–324 form a helical membrane-spanning segment; it reads FVVEGVFNSASAGILIYMSLV. The Cytoplasmic segment spans residues 325–343; it reads DLLATDFNNPKLQINTKLQ. The helical transmembrane segment at 344–364 threads the bilayer; sequence LMAYLALFLGAGLMSMLAIWA.

The protein belongs to the ZIP transporter (TC 2.A.5) family. Expressed in vascular bundles of stems.

The protein resides in the cell membrane. Zinc transporter that may mediate zinc uptake from the rhizosphere. Seems specific to zinc ions and may not transport other divalent cations. The protein is Zinc transporter 3 (ZIP3) of Oryza sativa subsp. japonica (Rice).